Here is a 573-residue protein sequence, read N- to C-terminus: Methionine--tRNA ligase (573 aa).

A 'HIGH' region motif is present at residues 11-21 (PYINGIKHLGN). Zn(2+)-binding residues include Cys143, Cys146, Cys156, and Cys159. The 'KMSKS' region signature appears at 346 to 350 (QFSTS). Thr349 serves as a coordination point for ATP.

It belongs to the class-I aminoacyl-tRNA synthetase family. MetG type 1 subfamily. As to quaternary structure, monomer. The cofactor is Zn(2+).

Its subcellular location is the cytoplasm. It carries out the reaction tRNA(Met) + L-methionine + ATP = L-methionyl-tRNA(Met) + AMP + diphosphate. Its function is as follows. Is required not only for elongation of protein synthesis but also for the initiation of all mRNA translation through initiator tRNA(fMet) aminoacylation. The protein is Methionine--tRNA ligase of Ruegeria sp. (strain TM1040) (Silicibacter sp.).